The sequence spans 1367 residues: Phospholipid-transporting ATPase C4F10.16c (1367 aa).

Residues 1 to 154 (MPSLINFDAI…PKNLWNQFKN (154 aa)) lie on the Cytoplasmic side of the membrane. The disordered stretch occupies residues 34-104 (HNGSLAHEGP…KKNEAGTESG (71 aa)). Basic and acidic residues predominate over residues 50-70 (SSRHHESQFSQEAHAEQRSRD). Residues 77 to 92 (FEGSCNNSDQSWTSRV) show a composition bias toward polar residues. The helical transmembrane segment at 155–172 (IANAFFLFVTLLQCIPLF) threads the bilayer. The Lumenal segment spans residues 173 to 177 (CPEHL). The helical transmembrane segment at 178–197 (GLSFIPLSVILLTTAIKDGI) threads the bilayer. Residues 198 to 482 (EDYRRCVLDK…PSKRSRITRD (285 aa)) lie on the Cytoplasmic side of the membrane. The chain crosses the membrane as a helical span at residues 483-503 (LNWTIILNFLLLFAMCLFSGV). Residues 504-531 (LRSIYSAQNNSARVFELSKNSNTAPAHG) are Lumenal-facing. The chain crosses the membrane as a helical span at residues 532–552 (IISIFTSLILFQNLVPISLYI). Residues 553-1091 (TMDIVRSIQS…GRWDYKRMSQ (539 aa)) lie on the Cytoplasmic side of the membrane. Aspartate 600 acts as the 4-aspartylphosphate intermediate in catalysis. Aspartate 600, lysine 601, threonine 602, glutamate 724, phenylalanine 765, serine 767, lysine 770, lysine 788, arginine 822, threonine 823, threonine 902, glycine 903, aspartate 904, arginine 1009, and lysine 1015 together coordinate ATP. Position 600 (aspartate 600) interacts with Mg(2+). Threonine 602 contributes to the Mg(2+) binding site. Aspartate 1035 provides a ligand contact to Mg(2+). ATP is bound by residues asparagine 1038 and aspartate 1039. Aspartate 1039 lines the Mg(2+) pocket. The helical transmembrane segment at 1092–1112 (MISFFFYKNVIWTFILFWYQF) threads the bilayer. Over 1113-1124 (YNEFDGNYIFDY) the chain is Lumenal. Residues 1125–1145 (TYVMLFNLLFTSLPVIIAGCF) form a helical membrane-spanning segment. The Cytoplasmic portion of the chain corresponds to 1146–1174 (DQDVDASVSMKNPSLYQRGILGLEWNGKR). A helical transmembrane segment spans residues 1175–1197 (FWSYMLDGIYQSLVCFGVALFVF). Topologically, residues 1198-1212 (KFGDFVSWTGRNIEC) are lumenal. A helical membrane pass occupies residues 1213–1233 (IEDIGLFISSPTIFVINIFIL). Residues 1234 to 1240 (MNQERLN) are Cytoplasmic-facing. A helical transmembrane segment spans residues 1241-1261 (LISLITWMFSIGVFWIWTFIY). Topologically, residues 1262–1276 (SEVGPSYAFHKSASR) are lumenal. The chain crosses the membrane as a helical span at residues 1277 to 1297 (TCQTFGFWCVTVLTIALCLLP). A 1,2-diacyl-sn-glycero-3-phospho-L-serine is bound at residue arginine 1298. The Cytoplasmic portion of the chain corresponds to 1298–1367 (RFSYICLQKL…TSVSFDDSNK (70 aa)).

The protein belongs to the cation transport ATPase (P-type) (TC 3.A.3) family. Type IV subfamily. Mg(2+) is required as a cofactor.

It is found in the cell membrane. Its subcellular location is the endoplasmic reticulum membrane. The enzyme catalyses ATP + H2O + phospholipidSide 1 = ADP + phosphate + phospholipidSide 2.. It catalyses the reaction a 1,2-diacyl-sn-glycero-3-phosphoethanolamine(out) + ATP + H2O = a 1,2-diacyl-sn-glycero-3-phosphoethanolamine(in) + ADP + phosphate + H(+). The catalysed reaction is a 1,2-diacyl-sn-glycero-3-phosphocholine(out) + ATP + H2O = a 1,2-diacyl-sn-glycero-3-phosphocholine(in) + ADP + phosphate + H(+). It carries out the reaction a beta-D-glucosyl-(1&lt;-&gt;1')-N-acylsphing-4-enine(out) + ATP + H2O = a beta-D-glucosyl-(1&lt;-&gt;1')-N-acylsphing-4-enine(in) + ADP + phosphate + H(+). The enzyme catalyses a 1,2-diacyl-sn-glycero-3-phospho-L-serine(out) + ATP + H2O = a 1,2-diacyl-sn-glycero-3-phospho-L-serine(in) + ADP + phosphate + H(+). In terms of biological role, catalytic component of a P4-ATPase flippase complex which catalyzes the hydrolysis of ATP coupled to the transport of glucosylceramide, phosphatidylcholine, phosphatidylethanolamine, and small amounts of phosphatidylserine from the lumenal to the cytosolic leaflet of the cell membrane and ensures the maintenance of asymmetric distribution of phospholipids. This is Phospholipid-transporting ATPase C4F10.16c from Schizosaccharomyces pombe (strain 972 / ATCC 24843) (Fission yeast).